The sequence spans 144 residues: Maximins 4/H3 type 2 (144 aa).

Residues 1 to 18 (MNFKYIIAVSFFIASAYA) form the signal peptide. A propeptide spanning residues 19-43 (RRNEKDVQSLSQRDVLEEESLREIR) is cleaved from the precursor. Residue asparagine 70 is modified to Asparagine amide. A propeptide spanning residues 74 to 123 (TAEDHEVMKRLEAVMRDLDSLDHPEEASERETRGFNQEEIANLFTKKEKR) is cleaved from the precursor. Position 143 is an isoleucine amide (isoleucine 143).

It belongs to the bombinin family. Expressed by the skin glands.

It is found in the secreted. Functionally, maximin-4 shows antibacterial activity against both Gram-positive and Gram-negative bacteria. It also shows antimicrobial activity against the fungus C.albicans, but not against A.flavus nor P.uticale. It has little hemolytic activity. It does not possess a significant cytotoxicity against tumor cell lines. It does not possess a significant anti-HIV activity. Maximin-H3 shows antibacterial activity against both Gram-positive and Gram-negative bacteria. It also shows antimicrobial activity against the fungus C.albicans. Shows strong hemolytic activity. In Bombina maxima (Giant fire-bellied toad), this protein is Maximins 4/H3 type 2.